We begin with the raw amino-acid sequence, 256 residues long: Imidazole glycerol phosphate synthase subunit HisF (256 aa).

Catalysis depends on residues D12 and D131.

The protein belongs to the HisA/HisF family. Heterodimer of HisH and HisF.

The protein localises to the cytoplasm. It catalyses the reaction 5-[(5-phospho-1-deoxy-D-ribulos-1-ylimino)methylamino]-1-(5-phospho-beta-D-ribosyl)imidazole-4-carboxamide + L-glutamine = D-erythro-1-(imidazol-4-yl)glycerol 3-phosphate + 5-amino-1-(5-phospho-beta-D-ribosyl)imidazole-4-carboxamide + L-glutamate + H(+). The protein operates within amino-acid biosynthesis; L-histidine biosynthesis; L-histidine from 5-phospho-alpha-D-ribose 1-diphosphate: step 5/9. Functionally, IGPS catalyzes the conversion of PRFAR and glutamine to IGP, AICAR and glutamate. The HisF subunit catalyzes the cyclization activity that produces IGP and AICAR from PRFAR using the ammonia provided by the HisH subunit. This chain is Imidazole glycerol phosphate synthase subunit HisF, found in Pseudomonas fluorescens (strain Pf0-1).